A 338-amino-acid polypeptide reads, in one-letter code: MTDHALLLVNLGSPASTSVADVRRYLNQFLMDPYVIDLPWPVRRLLVSLVLIKRPEQSAHAYASIWWEEGSPLVVLTRRLQAAMAEHWPHGPVEIAMRYGQPALPDVLARLAAQGVRKVTLAPLYPQFADSTVTTVIEQAKQTVSEHQLPLQMRVLQPFYEHPAYIEALAASARPYLEQGYDHLLLSFHGLPERHLKKLFPKGVKHDLRAADCCHGATAEVSSVCYRGQCLATAKAFAQSMGIPDGKWSVSFQSRLGRDKWIEPYTETRLDELAKAGVKKLLVMCPAFVADCIETLEEIGMRGSEQFVEAGGQELVLVPCLNDHPEWVRVLADMCEKA.

Residues His189 and Glu294 each contribute to the Fe cation site.

This sequence belongs to the ferrochelatase family.

It localises to the cytoplasm. The catalysed reaction is heme b + 2 H(+) = protoporphyrin IX + Fe(2+). The protein operates within porphyrin-containing compound metabolism; protoheme biosynthesis; protoheme from protoporphyrin-IX: step 1/1. Its function is as follows. Catalyzes the ferrous insertion into protoporphyrin IX. In Pseudomonas putida (strain ATCC 47054 / DSM 6125 / CFBP 8728 / NCIMB 11950 / KT2440), this protein is Ferrochelatase.